We begin with the raw amino-acid sequence, 126 residues long: Copper resistance protein C (126 aa).

An N-terminal signal peptide occupies residues Met-1–Ala-24. His-25 contributes to the Cu(2+) binding site. Residues Met-64, Met-67, Met-70, His-72, and Met-75 each coordinate Cu(+). His-115 is a Cu(2+) binding site.

The protein belongs to the CopC family. Monomer.

It localises to the periplasm. With respect to regulation, the redox state of copper bound to CopC may act as a switch between the possible trafficking pathways of the metal ion. Functionally, copper-binding protein involved in copper resistance and homeostasis. Probably mediates copper resistance by sequestering the excess of copper in the periplasm. May act as a copper carrier in the oxidizing periplasmic space that exchanges either Cu(I) or Cu(II) with its putative partners CopA, CopB and CopD. The polypeptide is Copper resistance protein C (Pseudomonas syringae pv. tomato).